A 745-amino-acid chain; its full sequence is Poly(A) polymerase alpha (745 aa).

The segment covering Met-1 to Gln-17 has biased composition (low complexity). A disordered region spans residues Met-1 to Ile-22. Residues Ser-10 and Ser-24 each carry the phosphoserine modification. ATP-binding positions include Phe-100–Ser-102, Thr-109, Asp-113–Asp-115, Asp-167, Lys-228, Tyr-237, and Gly-246–Val-247. Mg(2+) is bound by residues Asp-113, Asp-115, and Asp-167. Residues Lys-444, Lys-445, Lys-506, and Lys-507 each participate in a glycyl lysine isopeptide (Lys-Gly) (interchain with G-Cter in SUMO) cross-link. A Nuclear localization signal 1 motif is present at residues Arg-490–Lys-507. Residues His-508–Pro-643 are ser/Thr-rich. Over residues Leu-523–Ser-534 the composition is skewed to low complexity. Disordered stretches follow at residues Leu-523–Ala-565 and Ser-577–Ile-704. The span at Val-535–Asn-557 shows a compositional bias: polar residues. Phosphoserine occurs at positions 537 and 558. 2 stretches are compositionally biased toward low complexity: residues Ser-583–Ser-594 and Thr-611–Thr-640. An N6-acetyllysine mark is found at Lys-641 and Lys-650. A Nuclear localization signal 2 motif is present at residues Lys-650–Lys-665. 2 stretches are compositionally biased toward basic and acidic residues: residues Pro-655 to Thr-666 and Gly-682 to Leu-692. Residues Cys-677–Arg-745 are required for interaction with NUDT21. The segment covering Thr-694 to Ile-704 has biased composition (low complexity). Lys-736 bears the N6-acetyllysine; alternate mark. Lys-736 participates in a covalent cross-link: Glycyl lysine isopeptide (Lys-Gly) (interchain with G-Cter in SUMO); alternate. The residue at position 738 (Ser-738) is a Phosphoserine. The residue at position 740 (Lys-740) is an N6-acetyllysine; alternate. Lys-740 is covalently cross-linked (Glycyl lysine isopeptide (Lys-Gly) (interchain with G-Cter in SUMO); alternate).

The protein belongs to the poly(A) polymerase family. In terms of assembly, monomer. Found in a complex with CPSF1, FIP1L1 and PAPOLA. Interacts with AHCYL1 and FIP1L1; the interaction with AHCYL1 seems to increase interaction with FIP1L1. Interacts with NUDT21; the interaction is diminished by acetylation. Interacts with KPNB1; the interaction promotes PAP nuclear import and is inhibited by acetylation of PAP. Mg(2+) serves as cofactor. Requires Mn(2+) as cofactor. Polysumoylated. Varying sumoylation depending on tissue- and cell-type. Highly sumoylated in bladder and NIH 3T3 cells. Sumoylation is required for nuclear localization and enhances PAP stability. Desumoylated by SENP1. Inhibits polymerase activity. Post-translationally, hyperphosphorylation on multiple CDK2 consensus and non-consensus sites in the C-terminal Ser/Thr-rich region represses PAP activity in late M-phase. Phosphorylation/dephosphorylation may regulate the interaction between PAP and CPSF. In terms of processing, acetylated in the C-terminus. Acetylation decreases interaction with NUDT21 and KPNB1, and inhibits nuclear localization through inhibiting binding to the importin alpha/beta complex.

The protein localises to the cytoplasm. The protein resides in the nucleus. The enzyme catalyses RNA(n) + ATP = RNA(n)-3'-adenine ribonucleotide + diphosphate. Polymerase that creates the 3'-poly(A) tail of mRNA's. Also required for the endoribonucleolytic cleavage reaction at some polyadenylation sites. May acquire specificity through interaction with a cleavage and polyadenylation specificity factor (CPSF) at its C-terminus. The polypeptide is Poly(A) polymerase alpha (PAPOLA) (Homo sapiens (Human)).